Here is a 571-residue protein sequence, read N- to C-terminus: Cyclic di-GMP phosphodiesterase TpdA (571 aa).

3 consecutive transmembrane segments (helical) span residues 155 to 175 (IAWV…YAIN), 321 to 341 (VYYI…FLVI), and 395 to 415 (TLIS…AIYA). Positions 344–571 (HRSLQAFITY…HQGYFYPLHF (228 aa)) constitute an EAL domain.

The protein localises to the cell inner membrane. It carries out the reaction 3',3'-c-di-GMP + H2O = 5'-phosphoguanylyl(3'-&gt;5')guanosine + H(+). Its function is as follows. Cyclic di-GMP phosphodiesterase that plays an important role in modulating the global c-di-GMP pool. Its ability to alter the c-di-GMP pool has an effect on swimming motility, swarming motility and biofilm formation, multicellular behaviors that are important for the survival and dissemination of this environmental pathogen. Exhibits a dual function, namely, c-di-GMP degradation and modulation of its own expression. The sequence is that of Cyclic di-GMP phosphodiesterase TpdA from Vibrio parahaemolyticus serotype O3:K6 (strain RIMD 2210633).